Here is a 342-residue protein sequence, read N- to C-terminus: N-acetyl-gamma-glutamyl-phosphate reductase (342 aa).

Cys-149 is an active-site residue.

Belongs to the NAGSA dehydrogenase family. Type 1 subfamily.

It is found in the cytoplasm. The enzyme catalyses N-acetyl-L-glutamate 5-semialdehyde + phosphate + NADP(+) = N-acetyl-L-glutamyl 5-phosphate + NADPH + H(+). It participates in amino-acid biosynthesis; L-arginine biosynthesis; N(2)-acetyl-L-ornithine from L-glutamate: step 3/4. Catalyzes the NADPH-dependent reduction of N-acetyl-5-glutamyl phosphate to yield N-acetyl-L-glutamate 5-semialdehyde. This chain is N-acetyl-gamma-glutamyl-phosphate reductase, found in Cereibacter sphaeroides (strain ATCC 17029 / ATH 2.4.9) (Rhodobacter sphaeroides).